The following is a 139-amino-acid chain: ATP synthase epsilon chain (139 aa).

The protein belongs to the ATPase epsilon chain family. F-type ATPases have 2 components, CF(1) - the catalytic core - and CF(0) - the membrane proton channel. CF(1) has five subunits: alpha(3), beta(3), gamma(1), delta(1), epsilon(1). CF(0) has three main subunits: a, b and c.

The protein localises to the cell inner membrane. Produces ATP from ADP in the presence of a proton gradient across the membrane. This Pseudomonas putida (strain ATCC 700007 / DSM 6899 / JCM 31910 / BCRC 17059 / LMG 24140 / F1) protein is ATP synthase epsilon chain.